Here is a 447-residue protein sequence, read N- to C-terminus: Oxysterols receptor LXR-alpha (447 aa).

A disordered region spans residues 1–88 (MSLWLEAPVP…LRPQKRKKGP (88 aa)). The segment at 1 to 96 (MSLWLEAPVP…GPAPKMLGNE (96 aa)) is transactivation AF-1; required for ligand-independent transactivation function. The segment at residues 95–170 (NELCSVCGDK…AGMREECVLS (76 aa)) is a DNA-binding region (nuclear receptor). NR C4-type zinc fingers lie at residues 98 to 118 (CSVC…CEGC) and 134 to 158 (CHSG…LRKC). Positions 178-203 (KMKRQEEEQAQATSAPPRASSPPQVL) are disordered. The span at 187–203 (AQATSAPPRASSPPQVL) shows a compositional bias: low complexity. The transactivation AF-2; required for ligand-dependent transactivation function; mediates interaction with CCAR2 stretch occupies residues 205–447 (QLSPEQLGMI…LLSEIWDVHE (243 aa)). The NR LBD domain occupies 209 to 447 (EQLGMIEKLV…LLSEIWDVHE (239 aa)).

This sequence belongs to the nuclear hormone receptor family. NR1 subfamily. As to quaternary structure, heterodimer of NR1H3 and RXR (retinoic acid receptor). Interacts with CCAR2 (via N-terminus) in a ligand-independent manner. Interacts with SIRT1 and this interaction is inhibited by CCAR2. Ubiquitinated by UBR5, leading to its degradation: UBR5 specifically recognizes and binds ligand-bound NR1H3 when it is not associated with coactivators (NCOAs). In presence of NCOAs, the UBR5-degron is not accessible, preventing its ubiquitination and degradation.

It localises to the nucleus. Its subcellular location is the cytoplasm. Its function is as follows. Nuclear receptor that exhibits a ligand-dependent transcriptional activation activity. Interaction with retinoic acid receptor (RXR) shifts RXR from its role as a silent DNA-binding partner to an active ligand-binding subunit in mediating retinoid responses through target genes defined by LXRES. LXRES are DR4-type response elements characterized by direct repeats of two similar hexanuclotide half-sites spaced by four nucleotides. Plays an important role in the regulation of cholesterol homeostasis, regulating cholesterol uptake through MYLIP-dependent ubiquitination of LDLR, VLDLR and LRP8. Interplays functionally with RORA for the regulation of genes involved in liver metabolism. Induces LPCAT3-dependent phospholipid remodeling in endoplasmic reticulum (ER) membranes of hepatocytes, driving SREBF1 processing and lipogenesis. Via LPCAT3, triggers the incorporation of arachidonate into phosphatidylcholines of ER membranes, increasing membrane dynamics and enabling triacylglycerols transfer to nascent very low-density lipoprotein (VLDL) particles. Via LPCAT3 also counteracts lipid-induced ER stress response and inflammation, likely by modulating SRC kinase membrane compartmentalization and limiting the synthesis of lipid inflammatory mediators. The polypeptide is Oxysterols receptor LXR-alpha (NR1H3) (Bos taurus (Bovine)).